Consider the following 263-residue polypeptide: uncharacterized protein (263 aa).

The protein resides in the mitochondrion. This is an uncharacterized protein from Schizosaccharomyces pombe (strain 972 / ATCC 24843) (Fission yeast).